Here is a 250-residue protein sequence, read N- to C-terminus: Endonuclease NucS 2 (250 aa).

Belongs to the NucS endonuclease family.

It is found in the cytoplasm. In terms of biological role, cleaves both 3' and 5' ssDNA extremities of branched DNA structures. This Halobacterium salinarum (strain ATCC 700922 / JCM 11081 / NRC-1) (Halobacterium halobium) protein is Endonuclease NucS 2.